The following is a 361-amino-acid chain: Endo-1,4-beta-xylanase 2 (361 aa).

Residues 1–26 (MHFSTITAALALLGLGAATPTDYSTS) form the signal peptide. The GH10 domain maps to 46–354 (IGTALTIRDD…KPAYSSVLKT (309 aa)). Asn88 and Asn130 each carry an N-linked (GlcNAc...) asparagine glycan. Glu160 functions as the Proton donor in the catalytic mechanism. Glu276 serves as the catalytic Nucleophile. Cysteines 304 and 310 form a disulfide.

It belongs to the glycosyl hydrolase 10 (cellulase F) family.

The protein resides in the secreted. The catalysed reaction is Endohydrolysis of (1-&gt;4)-beta-D-xylosidic linkages in xylans.. The protein operates within glycan degradation; xylan degradation. In terms of biological role, endo-1,4-beta-xylanase involved in the hydrolysis of xylan, a major structural heterogeneous polysaccharide found in plant biomass representing the second most abundant polysaccharide in the biosphere, after cellulose. Hydrolyzes birch-wood xylan, with a similar activity toward oat-spelt xylan. Also shows weak activities toward pNP-beta-D-cellobioside and pNP-beta-D-xylopyranoside, but no detectable activity toward carboxymethyl cellulose and pNP-beta-L-arabinofuranoside.-. The chain is Endo-1,4-beta-xylanase 2 (xynII) from Aureobasidium pullulans (Black yeast).